A 493-amino-acid chain; its full sequence is Serine/threonine-protein kinase 3 (493 aa).

In terms of domain architecture, Protein kinase spans 26–277 (FDVLEKLGEG…ATQLLQHPFI (252 aa)). ATP is bound by residues 32-40 (LGEGSYGSV) and lysine 55. The active-site Proton acceptor is aspartate 145. The residue at position 179 (threonine 179) is a Phosphothreonine; by autocatalysis. Residues 286-327 (LRDLITEAMDIKAKRHEELQRELEEEDENSEEDELDSHTMVK) are a coiled coil. Disordered regions lie at residues 303 to 336 (ELQR…AGTM) and 369 to 414 (DDEE…NCNQ). Residues 308–320 (LEEEDENSEEDEL) show a composition bias toward acidic residues. Positions 325–336 (MVKTNSESAGTM) are enriched in polar residues. Over residues 369 to 378 (DDEEEEEEED) the composition is skewed to acidic residues. Positions 398 to 410 (YFDKQDSKNKPHD) are enriched in basic and acidic residues. One can recognise an SARAH domain in the interval 439-486 (FDFLKNLSFEELQMRLKALDPMMEREIEDLRQRYNAKRQPILDAMDAK). Positions 444–477 (NLSFEELQMRLKALDPMMEREIEDLRQRYNAKRQ) form a coiled coil.

The protein belongs to the protein kinase superfamily. STE Ser/Thr protein kinase family. STE20 subfamily. As to quaternary structure, homodimer; mediated via the coiled-coil region. It depends on Mg(2+) as a cofactor.

It is found in the cytoplasm. The protein localises to the nucleus. It catalyses the reaction L-seryl-[protein] + ATP = O-phospho-L-seryl-[protein] + ADP + H(+). The enzyme catalyses L-threonyl-[protein] + ATP = O-phospho-L-threonyl-[protein] + ADP + H(+). Inhibited by the C-terminal non-catalytic region. Activated by caspase-cleavage. Full activation also requires homodimerization and autophosphorylation of Thr-179. Its function is as follows. Stress-activated, pro-apoptotic kinase which, following caspase-cleavage, enters the nucleus and induces chromatin condensation followed by internucleosomal DNA fragmentation. Key component of the Hippo signaling pathway which plays a pivotal role in organ size control and tumor suppression by restricting proliferation and promoting apoptosis. The core of this pathway is composed of a kinase cascade wherein stk3/mst2 and stk4/mst1, in complex with its regulatory protein sav1, phosphorylates and activates lats1/2 in complex with its regulatory protein mob1, which in turn phosphorylates and inactivates yap1 oncoprotein and wwtr1/taz. Phosphorylation of yap1 by lats2 inhibits its translocation into the nucleus to regulate cellular genes important for cell proliferation, cell death, and cell migration. This chain is Serine/threonine-protein kinase 3 (stk3), found in Xenopus laevis (African clawed frog).